A 424-amino-acid polypeptide reads, in one-letter code: Tubby protein homolog 1 (424 aa).

The segment at 19–47 (MLEDKQKQKRHQSAGSVRTTTTTSSMSMN) is disordered. Positions 37-47 (TTTTTSSMSMN) are enriched in low complexity.

Belongs to the TUB family. In terms of assembly, interacts with rgb-3.

The protein resides in the cytoplasm. Its subcellular location is the cell projection. It localises to the axon. It is found in the dendrite. The protein localises to the cilium. Has a role in fat regulation independent of daf-16. Implicated in ciliar sensory function which is required for normal sensory behavior such as chemotaxis. Functions in life span control via the insulin/IGF-1 pathway. Thought to be involved in neuronal trafficking. The sequence is that of Tubby protein homolog 1 from Caenorhabditis briggsae.